A 105-amino-acid chain; its full sequence is Large ribosomal subunit protein eL36 (105 aa).

It belongs to the eukaryotic ribosomal protein eL36 family. As to quaternary structure, component of the large ribosomal subunit.

It localises to the cytoplasm. The protein localises to the cytosol. Its function is as follows. Component of the large ribosomal subunit. The ribosome is a large ribonucleoprotein complex responsible for the synthesis of proteins in the cell. This is Large ribosomal subunit protein eL36 (RPL36) from Hydrophis hardwickii (Hardwick's spine-bellied seasnake).